The following is a 387-amino-acid chain: Acetylserotonin O-methyltransferase (387 aa).

S-adenosyl-L-methionine-binding positions include tyrosine 153, tryptophan 170, glutamate 216, 246-248 (GDF), and arginine 263. Catalysis depends on histidine 266, which acts as the Proton donor/acceptor. Positions 267 and 317 each coordinate substrate. The segment at 355–387 (ARGGGAGARSDGGGGEATSQTGSGTGREVGAQD) is disordered. Over residues 356–370 (RGGGAGARSDGGGGE) the composition is skewed to gly residues.

This sequence belongs to the class I-like SAM-binding methyltransferase superfamily. Cation-independent O-methyltransferase family. In terms of assembly, homodimer.

The catalysed reaction is N-acetylserotonin + S-adenosyl-L-methionine = melatonin + S-adenosyl-L-homocysteine + H(+). It participates in aromatic compound metabolism; melatonin biosynthesis; melatonin from serotonin: step 1/2. Its function is as follows. Catalyzes the transfer of a methyl group onto N-acetylserotonin, producing melatonin (N-acetyl-5-methoxytryptamine). In Mus musculus molossinus (Japanese house mouse), this protein is Acetylserotonin O-methyltransferase (Asmt).